A 479-amino-acid polypeptide reads, in one-letter code: Neuronal acetylcholine receptor subunit alpha-9 (479 aa).

The first 22 residues, 1–22 (MNWSHSCISFCWIYFAASRLRA), serve as a signal peptide directing secretion. The Extracellular segment spans residues 23 to 238 (AETADGKYAQ…FTLLLKRRSS (216 aa)). The N-linked (GlcNAc...) asparagine glycan is linked to asparagine 57. An intrachain disulfide couples cysteine 155 to cysteine 169. N-linked (GlcNAc...) asparagine glycosylation occurs at asparagine 170. 2 residues coordinate Na(+): serine 191 and aspartate 193. Residues cysteine 219 and cysteine 220 are joined by a disulfide bond. A run of 3 helical transmembrane segments spans residues 239–259 (FYIV…PLSF), 269–289 (VSLG…VAEI), and 303–323 (YIAT…VMNI). Residues 324–457 (HFCGAEARPV…WKKVAKVIDR (134 aa)) are Cytoplasmic-facing. A helical membrane pass occupies residues 458–478 (FFMWIFFIMVFVMTILIIARA).

Belongs to the ligand-gated ion channel (TC 1.A.9) family. Acetylcholine receptor (TC 1.A.9.1) subfamily. Alpha-9/CHRNA9 sub-subfamily. Forms homo- or heteropentameric channels in conjunction with CHRNA10. The native outer hair cell receptor is composed of CHRNA9:CHRNA10 heterooligomers. Found in the stoichiometric form (CHRNA9)2:(CHRNA10)3. Post-translationally, N-glycosylated. As to expression, expressed in cochlea, keratinocytes, pituitary gland, B-cells and T-cells.

It is found in the synaptic cell membrane. The protein localises to the cell membrane. The enzyme catalyses Ca(2+)(in) = Ca(2+)(out). It catalyses the reaction K(+)(in) = K(+)(out). It carries out the reaction Na(+)(in) = Na(+)(out). The catalysed reaction is Mg(2+)(in) = Mg(2+)(out). Activated by a myriad of ligands such as acetylcholine. AChR activity is inhibited by the antagonist alpha-conotoxins RgIA and GeXXA, small disulfide-constrained peptides from cone snails. Component of neuronal acetylcholine receptors (nAChRs) that function as pentameric, ligand-gated cation channels with high calcium permeability among other activities. nAChRs are excitatory neurotrasnmitter receptors formed by a collection of nAChR subunits known to mediate synaptic transmission in the nervous system and the neuromuscular junction. Each nAchR subunit confers differential attributes to channel properties, including activation, deactivation and desensitization kinetics, pH sensitivity, cation permeability, and binding to allosteric modulators. Forms either homopentamers or heteropentamers with CHRNA10. Expressed in the inner ear, in sympathetic neurons and in other non-neuronal cells, such as skin keratinocytes and lymphocytes. nAChR formed by CHRNA9:CHRNA10 mediate central nervous system control of auditory and vestibular sensory processing. The channel is permeable to a range of divalent cations including calcium, the influx of which may activate a potassium current which hyperpolarizes the cell membrane. In the ear, mediates synaptic transmission between efferent olivocochlear fibers and hair cells of the cochlea, this may lead to a reduction in basilar membrane motion, altering the activity of auditory nerve fibers and reducing the range of dynamic hearing. This may protect against acoustic trauma. May also regulate keratinocyte adhesion. The chain is Neuronal acetylcholine receptor subunit alpha-9 from Homo sapiens (Human).